We begin with the raw amino-acid sequence, 72 residues long: Large ribosomal subunit protein bL31 (72 aa).

Zn(2+)-binding residues include Cys16, Cys18, Cys38, and Cys41.

It belongs to the bacterial ribosomal protein bL31 family. Type A subfamily. As to quaternary structure, part of the 50S ribosomal subunit. Zn(2+) serves as cofactor.

Its function is as follows. Binds the 23S rRNA. This Aliivibrio salmonicida (strain LFI1238) (Vibrio salmonicida (strain LFI1238)) protein is Large ribosomal subunit protein bL31.